Here is a 484-residue protein sequence, read N- to C-terminus: Regulatory protein ViaA (484 aa).

The protein belongs to the ViaA family. As to quaternary structure, homodimer. Interacts with RavA.

It is found in the cytoplasm. Its function is as follows. Component of the RavA-ViaA chaperone complex, which may act on the membrane to optimize the function of some of the respiratory chains. ViaA stimulates the ATPase activity of RavA. This Edwardsiella ictaluri (strain 93-146) protein is Regulatory protein ViaA.